The sequence spans 100 residues: Urease subunit gamma (100 aa).

It belongs to the urease gamma subunit family. In terms of assembly, heterotrimer of UreA (gamma), UreB (beta) and UreC (alpha) subunits. Three heterotrimers associate to form the active enzyme.

The protein localises to the cytoplasm. It carries out the reaction urea + 2 H2O + H(+) = hydrogencarbonate + 2 NH4(+). It participates in nitrogen metabolism; urea degradation; CO(2) and NH(3) from urea (urease route): step 1/1. In Bacillus sp. (strain TB-90), this protein is Urease subunit gamma.